A 176-amino-acid polypeptide reads, in one-letter code: Protein GrpE (176 aa).

The segment at 1–28 (MSEQKQEFENENAENSEHLQDENLQNIE) is disordered.

Belongs to the GrpE family. In terms of assembly, homodimer.

Its subcellular location is the cytoplasm. In terms of biological role, participates actively in the response to hyperosmotic and heat shock by preventing the aggregation of stress-denatured proteins, in association with DnaK and GrpE. It is the nucleotide exchange factor for DnaK and may function as a thermosensor. Unfolded proteins bind initially to DnaJ; upon interaction with the DnaJ-bound protein, DnaK hydrolyzes its bound ATP, resulting in the formation of a stable complex. GrpE releases ADP from DnaK; ATP binding to DnaK triggers the release of the substrate protein, thus completing the reaction cycle. Several rounds of ATP-dependent interactions between DnaJ, DnaK and GrpE are required for fully efficient folding. The chain is Protein GrpE from Campylobacter jejuni subsp. jejuni serotype O:2 (strain ATCC 700819 / NCTC 11168).